We begin with the raw amino-acid sequence, 558 residues long: uncharacterized protein (558 aa).

A run of 5 helical transmembrane segments spans residues 15–32, 39–61, 76–95, 104–126, and 166–188; these read PSVT…ALGL, IGTI…HFGV, LVIF…FPSL, LISL…ILGI, and MALA…LALL. RCK C-terminal domains lie at 196-278 and 286-370; these read EERD…LFGK and RPDI…ILGD. 5 helical membrane-spanning segments follow: residues 383-405, 409-426, 446-468, 473-495, and 533-555; these read LFGG…GVSM, LGLA…GAFG, FGII…DTII, LLWV…WASI, and VVYA…IMIL.

The protein belongs to the AAE transporter (TC 2.A.81) family.

The protein resides in the cell membrane. This is an uncharacterized protein from Porphyromonas gingivalis (strain ATCC BAA-308 / W83).